Here is a 459-residue protein sequence, read N- to C-terminus: ATP-dependent protease ATPase subunit HslU (459 aa).

Residues Val-18, 60 to 65 (GVGKTE), Asp-272, Glu-337, and Arg-409 each bind ATP.

It belongs to the ClpX chaperone family. HslU subfamily. A double ring-shaped homohexamer of HslV is capped on each side by a ring-shaped HslU homohexamer. The assembly of the HslU/HslV complex is dependent on binding of ATP.

It is found in the cytoplasm. ATPase subunit of a proteasome-like degradation complex; this subunit has chaperone activity. The binding of ATP and its subsequent hydrolysis by HslU are essential for unfolding of protein substrates subsequently hydrolyzed by HslV. HslU recognizes the N-terminal part of its protein substrates and unfolds these before they are guided to HslV for hydrolysis. This is ATP-dependent protease ATPase subunit HslU from Thermoanaerobacter pseudethanolicus (strain ATCC 33223 / 39E) (Clostridium thermohydrosulfuricum).